The following is a 280-amino-acid chain: Probable endonuclease 4 (280 aa).

Residues His69, His109, Glu145, Asp179, His182, His216, Asp229, His231, and Glu261 each contribute to the Zn(2+) site.

This sequence belongs to the AP endonuclease 2 family. It depends on Zn(2+) as a cofactor.

It carries out the reaction Endonucleolytic cleavage to 5'-phosphooligonucleotide end-products.. In terms of biological role, endonuclease IV plays a role in DNA repair. It cleaves phosphodiester bonds at apurinic or apyrimidinic (AP) sites, generating a 3'-hydroxyl group and a 5'-terminal sugar phosphate. In Aliarcobacter butzleri (strain RM4018) (Arcobacter butzleri), this protein is Probable endonuclease 4.